We begin with the raw amino-acid sequence, 429 residues long: Histidinol dehydrogenase (429 aa).

Residues Tyr-127, Gln-188, and Asn-211 each coordinate NAD(+). Residues Ser-234, Gln-256, and His-259 each contribute to the substrate site. Zn(2+) is bound by residues Gln-256 and His-259. Catalysis depends on proton acceptor residues Glu-324 and His-325. Residues His-325, Asp-358, Glu-412, and His-417 each coordinate substrate. Asp-358 is a Zn(2+) binding site. His-417 lines the Zn(2+) pocket.

Belongs to the histidinol dehydrogenase family. It depends on Zn(2+) as a cofactor.

The catalysed reaction is L-histidinol + 2 NAD(+) + H2O = L-histidine + 2 NADH + 3 H(+). Its pathway is amino-acid biosynthesis; L-histidine biosynthesis; L-histidine from 5-phospho-alpha-D-ribose 1-diphosphate: step 9/9. Catalyzes the sequential NAD-dependent oxidations of L-histidinol to L-histidinaldehyde and then to L-histidine. The protein is Histidinol dehydrogenase of Bacillus anthracis.